Here is a 781-residue protein sequence, read N- to C-terminus: Zinc finger protein klf1 (781 aa).

2 consecutive C2H2-type zinc fingers follow at residues 17–41 (YKCD…FRSH) and 47–70 (FICP…NQKH).

The protein localises to the nucleus. Its subcellular location is the cytoplasm. It localises to the cytoskeleton. It is found in the spindle. Required for maintaining cell viability in nitrogen-deficient stationary phase (G0) cells. The sequence is that of Zinc finger protein klf1 (klf1) from Schizosaccharomyces pombe (strain 972 / ATCC 24843) (Fission yeast).